The chain runs to 341 residues: GDP-fucose transporter 1 (341 aa).

10 consecutive transmembrane segments (helical) span residues 17–37 (LVIG…LAIT), 41–61 (YPGL…YLLG), 71–91 (FTWD…LAIF), 103–123 (DTFI…DTVF), 132–152 (LTFL…ATDS), 156–176 (LTAY…MVYI), 187–207 (IWGL…VFWF), 231–251 (AFSS…FGFA), 260–280 (AFTV…VLIW), and 283–303 (HATP…VGYQ). Residues 316 to 341 (SEKDSEKGEEDEELTQLVPGKLASVV) are disordered.

It belongs to the nucleotide-sugar transporter family. GDP-Mannose:GMP antiporter (GMA) (TC 2.A.7.13) subfamily. Ubiquitous.

It is found in the golgi apparatus membrane. Functionally, acts as the major nucleotide-sugar transporter for the import of GDP-Fucose into the Golgi lumen. Transports GDP-Fucose in a strict counter-exchange mode. Is required for proper plant growth and development. Also acts as a GDP-mannose transporter that may be involved in the import of GDP-mannose from the cytoplasm into the Golgi lumen. The sequence is that of GDP-fucose transporter 1 from Arabidopsis thaliana (Mouse-ear cress).